The chain runs to 201 residues: MNKSRIDKQNEVYNFIKLQIKEKGYPPSVREICKAVGLSSTSSVHFHLKRLEKEGLIKRDSSKTRAIEIVDPTSKKEVINVPIVGTITAGNPILAIENIEDVFPLPIDYVKNTKDLFMLKVSGESMIEAGILDGDLAIIEKTDSANNGDIVVALIDNEATLKRFFKESSYIRLQPENKSMKPIILENCKVLGRLVGIYRKY.

Positions 29 to 49 (VREICKAVGLSSTSSVHFHLK) form a DNA-binding region, H-T-H motif. Residues Ser125 and Lys162 each act as for autocatalytic cleavage activity in the active site.

The protein belongs to the peptidase S24 family. Homodimer.

The enzyme catalyses Hydrolysis of Ala-|-Gly bond in repressor LexA.. Functionally, represses a number of genes involved in the response to DNA damage (SOS response), including recA and lexA. In the presence of single-stranded DNA, RecA interacts with LexA causing an autocatalytic cleavage which disrupts the DNA-binding part of LexA, leading to derepression of the SOS regulon and eventually DNA repair. The polypeptide is LexA repressor (Clostridium botulinum (strain 657 / Type Ba4)).